A 440-amino-acid chain; its full sequence is 23S rRNA (uracil(1939)-C(5))-methyltransferase RlmD (440 aa).

The TRAM domain occupies 11–69; that stretch reads STLDTKHQPVTIERLDHQGSGLAFLHKKPLFVDGALPGEEVLIQLTENKSKYARGQLIK. [4Fe-4S] cluster is bound by residues cysteine 82, cysteine 88, cysteine 91, and cysteine 169. S-adenosyl-L-methionine-binding residues include glutamine 272, phenylalanine 301, asparagine 306, glutamate 322, asparagine 349, and aspartate 370. Cysteine 396 (nucleophile) is an active-site residue.

This sequence belongs to the class I-like SAM-binding methyltransferase superfamily. RNA M5U methyltransferase family. RlmD subfamily.

The catalysed reaction is uridine(1939) in 23S rRNA + S-adenosyl-L-methionine = 5-methyluridine(1939) in 23S rRNA + S-adenosyl-L-homocysteine + H(+). Its function is as follows. Catalyzes the formation of 5-methyl-uridine at position 1939 (m5U1939) in 23S rRNA. The protein is 23S rRNA (uracil(1939)-C(5))-methyltransferase RlmD of Vibrio cholerae serotype O1 (strain M66-2).